A 427-amino-acid polypeptide reads, in one-letter code: Outer capsid protein P8 (427 aa).

It belongs to the phytoreovirus outer capsid protein P8 family. In terms of assembly, homotrimer. Homomultimer.

The protein localises to the virion. It is found in the host cytoplasm. Functionally, capsid protein which self-assembles to form the outer icosahedral capsid with a T=13 symmetry, about 70 nm in diameter and consisting of 780 molecules capsid proteins. This Catharanthus roseus (Madagascar periwinkle) protein is Outer capsid protein P8.